The following is a 161-amino-acid chain: Transcriptional repressor NrdR (161 aa).

Polar residues predominate over residues 1–11 (MRCPSCNSLDT). A disordered region spans residues 1–20 (MRCPSCNSLDTQVKDSRPTE). A zinc finger spans residues 3–34 (CPSCNSLDTQVKDSRPTEDSSVIRRRRVCVTC). The ATP-cone domain occupies 49–139 (LTVIKRNGRR…VYRNFREAKD (91 aa)).

It belongs to the NrdR family. It depends on Zn(2+) as a cofactor.

Its function is as follows. Negatively regulates transcription of bacterial ribonucleotide reductase nrd genes and operons by binding to NrdR-boxes. The chain is Transcriptional repressor NrdR from Bradyrhizobium sp. (strain BTAi1 / ATCC BAA-1182).